A 669-amino-acid polypeptide reads, in one-letter code: Threonine--tRNA ligase (669 aa).

A TGS domain is found at 3–60 (DAQQITLIVDGEETKVTEGTTGAELFFERRDVVVARVNGVLKDLDQVLTEGADVEGVT). A catalytic region spans residues 260-566 (DHRKLGVELD…LTEHYAGAFP (307 aa)). Residues cysteine 365, histidine 416, and histidine 543 each contribute to the Zn(2+) site.

The protein belongs to the class-II aminoacyl-tRNA synthetase family. Homodimer. Zn(2+) is required as a cofactor.

Its subcellular location is the cytoplasm. The catalysed reaction is tRNA(Thr) + L-threonine + ATP = L-threonyl-tRNA(Thr) + AMP + diphosphate + H(+). Catalyzes the attachment of threonine to tRNA(Thr) in a two-step reaction: L-threonine is first activated by ATP to form Thr-AMP and then transferred to the acceptor end of tRNA(Thr). Also edits incorrectly charged L-seryl-tRNA(Thr). This Paenarthrobacter aurescens (strain TC1) protein is Threonine--tRNA ligase.